The sequence spans 689 residues: Glycine--tRNA ligase beta subunit (689 aa).

This sequence belongs to the class-II aminoacyl-tRNA synthetase family. Tetramer of two alpha and two beta subunits.

It localises to the cytoplasm. The catalysed reaction is tRNA(Gly) + glycine + ATP = glycyl-tRNA(Gly) + AMP + diphosphate. This is Glycine--tRNA ligase beta subunit from Shewanella amazonensis (strain ATCC BAA-1098 / SB2B).